We begin with the raw amino-acid sequence, 195 residues long: Pyruvoyl-dependent arginine decarboxylase AaxB (195 aa).

Serine 53 carries the pyruvic acid (Ser) modification.

Belongs to the pyruvoyl-dependent arginine decarboxylase family. Trimer of an alpha-beta dimer. Pyruvate is required as a cofactor.

The protein localises to the cytoplasm. The enzyme catalyses L-arginine + H(+) = agmatine + CO2. Functionally, part of the AaxABC system, catalyzes the decarboxylation of L-arginine. The arginine uptake by the bacterium in the macrophage may be a virulence factor against the host innate immune response. This Chlamydia caviae (strain ATCC VR-813 / DSM 19441 / 03DC25 / GPIC) (Chlamydophila caviae) protein is Pyruvoyl-dependent arginine decarboxylase AaxB (aaxB).